The primary structure comprises 178 residues: Redox-sensing transcriptional repressor Rex (178 aa).

59–64 is a binding site for NAD(+); that stretch reads GVGNMG.

It belongs to the transcriptional regulatory Rex family. As to quaternary structure, homodimer.

The protein localises to the cytoplasm. Modulates transcription in response to changes in cellular NADH/NAD(+) redox state. This is Redox-sensing transcriptional repressor Rex from Streptococcus suis.